Here is a 238-residue protein sequence, read N- to C-terminus: Putative tyrosine-protein phosphatase OCA1 (238 aa).

A disordered region spans residues 1 to 43 (MTSKVGEYEDVPEDESRLTEENVSVPEEEVEDEDEEEDDDDDH). Thr-2 is subject to N-acetylthreonine. At Ser-24 the chain carries Phosphoserine. The span at 26–42 (PEEEVEDEDEEEDDDDD) shows a compositional bias: acidic residues. The 159-residue stretch at 72–230 (NFCPVERYLY…LVKIDKNKAP (159 aa)) folds into the Tyrosine-protein phosphatase domain. The Phosphocysteine intermediate role is filled by Cys-168.

It belongs to the protein-tyrosine phosphatase family.

Its subcellular location is the cytoplasm. The enzyme catalyses O-phospho-L-tyrosyl-[protein] + H2O = L-tyrosyl-[protein] + phosphate. Functionally, putative tyrosine-protein phosphatase required for protection against superoxide stress. Involved in cell-cycle delay in response to linoleic acid hydroperoxide (LoaOOH). The protein is Putative tyrosine-protein phosphatase OCA1 (OCA1) of Saccharomyces cerevisiae (strain YJM789) (Baker's yeast).